The sequence spans 379 residues: Guanine nucleotide-binding protein G(s) subunit alpha (379 aa).

The interval 1–29 (MGCFGSAGAKGDAEENKKRKEANKNINKQ) is disordered. Gly2 is lipidated: N-palmitoyl glycine. Cys3 carries the S-palmitoyl cysteine lipid modification. A G-alpha domain is found at 39 to 379 (ATHRLLLLGA…RMHLRQYELL (341 aa)). Residues 42-55 (RLLLLGAGESGKST) are G1 motif. Residues 47-54 (GAGESGKS), 183-189 (LRCRVLT), 208-212 (DVGGQ), 277-280 (NKQD), and Ala351 each bind GTP. Mg(2+) is bound by residues Ser54 and Thr189. The tract at residues 181 to 189 (DILRCRVLT) is G2 motif. The interval 204-213 (FHMFDVGGQR) is G3 motif. The tract at residues 273 to 280 (ILFLNKQD) is G4 motif. The G5 motif stretch occupies residues 349-354 (TCAVDT).

Belongs to the G-alpha family. G(s) subfamily. G proteins are composed of 3 units; alpha, beta and gamma. The alpha chain contains the guanine nucleotide binding site.

Guanine nucleotide-binding proteins (G proteins) are involved as modulators or transducers in various transmembrane signaling systems. The G(s) protein is involved in hormonal regulation of adenylate cyclase: it activates the cyclase in response to beta-adrenergic stimuli. The chain is Guanine nucleotide-binding protein G(s) subunit alpha from Homarus americanus (American lobster).